The sequence spans 112 residues: Large ribosomal subunit protein eL30y (112 aa).

This sequence belongs to the eukaryotic ribosomal protein eL30 family.

This chain is Large ribosomal subunit protein eL30y (RPL30B), found in Arabidopsis thaliana (Mouse-ear cress).